Consider the following 100-residue polypeptide: uncharacterized protein (100 aa).

Residues 1 to 23 (MKYVALAFVLSLVILQISAQVGA) form the signal peptide.

As to expression, nacreous layer of shell (at protein level). Expressed primarily in the mantle with highest level in the mantle pallium and lower level in the mantle edge.

The protein resides in the secreted. This is an uncharacterized protein from Margaritifera margaritifera (Freshwater pearl mussel).